The primary structure comprises 165 residues: Endoribonuclease YbeY (165 aa).

Positions 130, 134, and 140 each coordinate Zn(2+).

The protein belongs to the endoribonuclease YbeY family. It depends on Zn(2+) as a cofactor.

It localises to the cytoplasm. Its function is as follows. Single strand-specific metallo-endoribonuclease involved in late-stage 70S ribosome quality control and in maturation of the 3' terminus of the 16S rRNA. This Streptococcus agalactiae serotype Ia (strain ATCC 27591 / A909 / CDC SS700) protein is Endoribonuclease YbeY.